A 143-amino-acid chain; its full sequence is Large ribosomal subunit protein uL15 (143 aa).

Composition is skewed to basic residues over residues 1-14 and 23-38; these read MIRK…KRGS and KKHR…GNAG. A disordered region spans residues 1–38; the sequence is MIRKSKKITKKRGSRTCGYGEAKKHRGAGHRGGRGNAG.

Belongs to the universal ribosomal protein uL15 family. Part of the 50S ribosomal subunit.

In terms of biological role, binds to the 23S rRNA. This Methanococcus maripaludis (strain DSM 14266 / JCM 13030 / NBRC 101832 / S2 / LL) protein is Large ribosomal subunit protein uL15.